The following is a 219-amino-acid chain: Ribose-5-phosphate isomerase A (219 aa).

Residues 28-31 (TGST), 81-84 (DGAD), and 94-97 (KGGG) each bind substrate. Glu-103 serves as the catalytic Proton acceptor. Position 121 (Lys-121) interacts with substrate.

It belongs to the ribose 5-phosphate isomerase family. As to quaternary structure, homodimer.

The enzyme catalyses aldehydo-D-ribose 5-phosphate = D-ribulose 5-phosphate. The protein operates within carbohydrate degradation; pentose phosphate pathway; D-ribose 5-phosphate from D-ribulose 5-phosphate (non-oxidative stage): step 1/1. Its function is as follows. Catalyzes the reversible conversion of ribose-5-phosphate to ribulose 5-phosphate. In Acidithiobacillus ferrooxidans (strain ATCC 23270 / DSM 14882 / CIP 104768 / NCIMB 8455) (Ferrobacillus ferrooxidans (strain ATCC 23270)), this protein is Ribose-5-phosphate isomerase A.